We begin with the raw amino-acid sequence, 396 residues long: Carbamoyl phosphate synthase small chain (396 aa).

The tract at residues 1-204 (MTQHDNDPAW…WDKGFGQQDK (204 aa)) is CPSase. Residues Ser59, Gly256, and Gly258 each coordinate L-glutamine. A Glutamine amidotransferase type-1 domain is found at 208-396 (NVVAIDYGIK…AELMRQKKSA (189 aa)). Cys285 serves as the catalytic Nucleophile. Positions 286, 289, 327, 329, and 330 each coordinate L-glutamine. Residues His369 and Glu371 contribute to the active site.

The protein belongs to the CarA family. In terms of assembly, composed of two chains; the small (or glutamine) chain promotes the hydrolysis of glutamine to ammonia, which is used by the large (or ammonia) chain to synthesize carbamoyl phosphate. Tetramer of heterodimers (alpha,beta)4.

The catalysed reaction is hydrogencarbonate + L-glutamine + 2 ATP + H2O = carbamoyl phosphate + L-glutamate + 2 ADP + phosphate + 2 H(+). It carries out the reaction L-glutamine + H2O = L-glutamate + NH4(+). The protein operates within amino-acid biosynthesis; L-arginine biosynthesis; carbamoyl phosphate from bicarbonate: step 1/1. It participates in pyrimidine metabolism; UMP biosynthesis via de novo pathway; (S)-dihydroorotate from bicarbonate: step 1/3. Small subunit of the glutamine-dependent carbamoyl phosphate synthetase (CPSase). CPSase catalyzes the formation of carbamoyl phosphate from the ammonia moiety of glutamine, carbonate, and phosphate donated by ATP, constituting the first step of 2 biosynthetic pathways, one leading to arginine and/or urea and the other to pyrimidine nucleotides. The small subunit (glutamine amidotransferase) binds and cleaves glutamine to supply the large subunit with the substrate ammonia. The sequence is that of Carbamoyl phosphate synthase small chain from Bradyrhizobium diazoefficiens (strain JCM 10833 / BCRC 13528 / IAM 13628 / NBRC 14792 / USDA 110).